Consider the following 69-residue polypeptide: uncharacterized protein (69 aa).

An HTH cro/C1-type domain is found at 10–64 (IRAFRKLKGYTQEGFAKALGISVSILGEIERGNRLPSAAIIQDAADVLNISADEL). A DNA-binding region (H-T-H motif) is located at residues 21-40 (QEGFAKALGISVSILGEIER).

This is an uncharacterized protein from Bacillus subtilis (strain 168).